We begin with the raw amino-acid sequence, 262 residues long: 5'-nucleotidase SurE (262 aa).

4 residues coordinate a divalent metal cation: D11, D12, S43, and N101. Over residues 220–229 the composition is skewed to basic and acidic residues; that stretch reads SAGDGPKEWP. The tract at residues 220 to 246 is disordered; that stretch reads SAGDGPKEWPSDVSQIETNSPSLTPIQ. Over residues 231 to 244 the composition is skewed to polar residues; that stretch reads DVSQIETNSPSLTP.

The protein belongs to the SurE nucleotidase family. The cofactor is a divalent metal cation.

Its subcellular location is the cytoplasm. It catalyses the reaction a ribonucleoside 5'-phosphate + H2O = a ribonucleoside + phosphate. In terms of biological role, nucleotidase that shows phosphatase activity on nucleoside 5'-monophosphates. The sequence is that of 5'-nucleotidase SurE from Prochlorococcus marinus (strain SARG / CCMP1375 / SS120).